The following is a 358-amino-acid chain: Ornithine cyclodeaminase (358 aa).

The L-ornithine site is built by Arg52 and Lys76. NAD(+) contacts are provided by residues Thr91, Arg119, 146 to 147 (AQ), Asp168, Thr208, 231 to 234 (VGGD), Lys238, and Ser299. Arg119 is a binding site for L-ornithine. Asp234 serves as a coordination point for L-ornithine. Residue Asp234 is the Proton donor/acceptor of the active site. Val300 is a binding site for L-ornithine.

Belongs to the ornithine cyclodeaminase/mu-crystallin family. NAD(+) is required as a cofactor.

It catalyses the reaction L-ornithine = L-proline + NH4(+). It participates in amino-acid biosynthesis; L-proline biosynthesis; L-proline from L-ornithine: step 1/1. Catalyzes the conversion of L-ornithine into L-proline with release of ammonia. In Brucella suis biovar 1 (strain 1330), this protein is Ornithine cyclodeaminase.